The sequence spans 860 residues: DNA mismatch repair protein MutS (860 aa).

Residue glycine 618 to serine 625 coordinates ATP.

This sequence belongs to the DNA mismatch repair MutS family.

This protein is involved in the repair of mismatches in DNA. It is possible that it carries out the mismatch recognition step. This protein has a weak ATPase activity. The protein is DNA mismatch repair protein MutS of Shewanella piezotolerans (strain WP3 / JCM 13877).